A 62-amino-acid polypeptide reads, in one-letter code: Large ribosomal subunit protein bL28 (62 aa).

The segment at 1 to 28 (MARKCVITGRKSRSGNSRSHAMNASKRT) is disordered. A compositionally biased stretch (polar residues) spans 14–26 (SGNSRSHAMNASK).

The protein belongs to the bacterial ribosomal protein bL28 family.

This is Large ribosomal subunit protein bL28 from Bacillus licheniformis (strain ATCC 14580 / DSM 13 / JCM 2505 / CCUG 7422 / NBRC 12200 / NCIMB 9375 / NCTC 10341 / NRRL NRS-1264 / Gibson 46).